The sequence spans 349 residues: Phosphate acyltransferase (349 aa).

Belongs to the PlsX family. As to quaternary structure, homodimer. Probably interacts with PlsY.

The protein resides in the cytoplasm. It carries out the reaction a fatty acyl-[ACP] + phosphate = an acyl phosphate + holo-[ACP]. Its pathway is lipid metabolism; phospholipid metabolism. In terms of biological role, catalyzes the reversible formation of acyl-phosphate (acyl-PO(4)) from acyl-[acyl-carrier-protein] (acyl-ACP). This enzyme utilizes acyl-ACP as fatty acyl donor, but not acyl-CoA. In Colwellia psychrerythraea (strain 34H / ATCC BAA-681) (Vibrio psychroerythus), this protein is Phosphate acyltransferase.